The sequence spans 474 residues: 4-aminobutyrate aminotransferase (474 aa).

Residues 1–13 show a composition bias toward polar residues; sequence MSSTATVTESTHF. The segment at 1 to 31 is disordered; it reads MSSTATVTESTHFFPNEPQGPSIKTETIPGP. A pyridoxal 5'-phosphate-binding site is contributed by 142–143; sequence GS. Substrate is bound at residue Arg-199. Lys-333 carries the N6-(pyridoxal phosphate)lysine modification. A pyridoxal 5'-phosphate-binding site is contributed by Thr-357.

Belongs to the class-III pyridoxal-phosphate-dependent aminotransferase family. As to quaternary structure, homodimer. It depends on pyridoxal 5'-phosphate as a cofactor.

It is found in the cytoplasm. The catalysed reaction is 4-aminobutanoate + 2-oxoglutarate = succinate semialdehyde + L-glutamate. Its function is as follows. Required for the degradation of gamma-aminobutyric acid (GABA), which is important for utilization of GABA as nitrogen source. Deaminates GABA to succinate-semialdehyde, which in turn is converted to succinate by the succinate semialdehyde dehydrogenase. Cannot transaminate beta-alanine (BAL). The protein is 4-aminobutyrate aminotransferase (uga1) of Schizosaccharomyces pombe (strain 972 / ATCC 24843) (Fission yeast).